The following is a 56-amino-acid chain: Aspartyl-phosphate phosphatase YisI (56 aa).

It belongs to the spo0E family.

Its function is as follows. Aspartyl-phosphate phosphatase which specifically dephosphorylates the sporulation transcription factor Spo0A-P and negatively regulates the sporulation initiation pathway in order to control the proper timing of sporulation. The sequence is that of Aspartyl-phosphate phosphatase YisI (yisI) from Bacillus subtilis (strain 168).